The following is a 112-amino-acid chain: Outer membrane protein assembly factor BamE (112 aa).

Positions 1–19 (MRCKTLTAAAAVLLMLTAG) are cleaved as a signal peptide. Cys-20 carries the N-palmitoyl cysteine lipid modification. Cys-20 carries the S-diacylglycerol cysteine lipid modification.

The protein belongs to the BamE family. Part of the Bam complex, which is composed of the outer membrane protein BamA, and four lipoproteins BamB, BamC, BamD and BamE.

The protein localises to the cell outer membrane. Functionally, part of the outer membrane protein assembly complex, which is involved in assembly and insertion of beta-barrel proteins into the outer membrane. The chain is Outer membrane protein assembly factor BamE from Salmonella typhimurium (strain LT2 / SGSC1412 / ATCC 700720).